The chain runs to 226 residues: ATP synthase subunit a (226 aa).

The next 6 helical transmembrane spans lie at 18 to 38, 79 to 99, 105 to 125, 134 to 154, 179 to 199, and 201 to 221; these read FITG…SLGA, LAGT…IPGF, SWSF…FEGI, FAHF…IEII, LIML…VLFF, and GILQ…GAVL.

The protein belongs to the ATPase A chain family. F-type ATPases have 2 components, CF(1) - the catalytic core - and CF(0) - the membrane proton channel. CF(1) has five subunits: alpha(3), beta(3), gamma(1), delta(1), epsilon(1). CF(0) has three main subunits: a(1), b(2) and c(9-12). The alpha and beta chains form an alternating ring which encloses part of the gamma chain. CF(1) is attached to CF(0) by a central stalk formed by the gamma and epsilon chains, while a peripheral stalk is formed by the delta and b chains.

It is found in the cell inner membrane. Key component of the proton channel; it plays a direct role in the translocation of protons across the membrane. The chain is ATP synthase subunit a from Helicobacter pylori (strain HPAG1).